We begin with the raw amino-acid sequence, 179 residues long: Shikimate kinase (179 aa).

ATP is bound at residue 12–17 (GVGKSK). Ser-16 lines the Mg(2+) pocket. Substrate contacts are provided by Asp-34, Arg-61, and Gly-83. Arg-131 is an ATP binding site. Arg-147 provides a ligand contact to substrate.

It belongs to the shikimate kinase family. As to quaternary structure, monomer. Mg(2+) serves as cofactor.

It localises to the cytoplasm. It catalyses the reaction shikimate + ATP = 3-phosphoshikimate + ADP + H(+). Its pathway is metabolic intermediate biosynthesis; chorismate biosynthesis; chorismate from D-erythrose 4-phosphate and phosphoenolpyruvate: step 5/7. Catalyzes the specific phosphorylation of the 3-hydroxyl group of shikimic acid using ATP as a cosubstrate. This is Shikimate kinase from Leptospira borgpetersenii serovar Hardjo-bovis (strain JB197).